The chain runs to 335 residues: Ornithine carbamoyltransferase (335 aa).

Carbamoyl phosphate-binding positions include 56-59 (STRT), glutamine 83, arginine 107, and 134-137 (HPTQ). Residues asparagine 168, aspartate 232, and 236 to 237 (SM) contribute to the L-ornithine site. Carbamoyl phosphate-binding positions include 274 to 275 (CL) and arginine 320.

Belongs to the aspartate/ornithine carbamoyltransferase superfamily. OTCase family.

The protein resides in the cytoplasm. The catalysed reaction is carbamoyl phosphate + L-ornithine = L-citrulline + phosphate + H(+). Its pathway is amino-acid biosynthesis; L-arginine biosynthesis; L-arginine from L-ornithine and carbamoyl phosphate: step 1/3. Functionally, reversibly catalyzes the transfer of the carbamoyl group from carbamoyl phosphate (CP) to the N(epsilon) atom of ornithine (ORN) to produce L-citrulline. The polypeptide is Ornithine carbamoyltransferase (Yersinia pseudotuberculosis serotype I (strain IP32953)).